Here is a 269-residue protein sequence, read N- to C-terminus: MTALPRYAVFGNPVAHSKSPQIHQQFALQEGVDIEYERICADIGGFAQAVSTFFETGGCGANVTVPFKQEAFHLADEHSERALAAGAVNTLIPLKNGKLRGDNTDGIGLTNDITQVKNIAIEGKTILLLGAGGAVRGVIPVLKEHRPARIVIANRTRAKAEELAQLFGIEAVPMADVNGGFDIIINGTSGGLNGQIPDIPPDIFQNCALAYDMVYGCAAKPFLDFARQSGAKKTADGLGMLVGQAAASYALWRGFTPDIRPVIEYMKAL.

Residues 17–19 (SKS) and T64 contribute to the shikimate site. K68 acts as the Proton acceptor in catalysis. An NADP(+)-binding site is contributed by E80. N89 and D105 together coordinate shikimate. NADP(+) is bound by residues 130-134 (GAGGA), 154-159 (NRTRAK), and M213. Y215 contacts shikimate. Residue G237 coordinates NADP(+).

It belongs to the shikimate dehydrogenase family. Homodimer.

The catalysed reaction is shikimate + NADP(+) = 3-dehydroshikimate + NADPH + H(+). It participates in metabolic intermediate biosynthesis; chorismate biosynthesis; chorismate from D-erythrose 4-phosphate and phosphoenolpyruvate: step 4/7. Its function is as follows. Involved in the biosynthesis of the chorismate, which leads to the biosynthesis of aromatic amino acids. Catalyzes the reversible NADPH linked reduction of 3-dehydroshikimate (DHSA) to yield shikimate (SA). This Neisseria meningitidis serogroup B (strain ATCC BAA-335 / MC58) protein is Shikimate dehydrogenase (NADP(+)).